The sequence spans 159 residues: Endoribonuclease YbeY (159 aa).

3 residues coordinate Zn(2+): His125, His129, and His135.

This sequence belongs to the endoribonuclease YbeY family. Zn(2+) serves as cofactor.

It is found in the cytoplasm. Its function is as follows. Single strand-specific metallo-endoribonuclease involved in late-stage 70S ribosome quality control and in maturation of the 3' terminus of the 16S rRNA. This Brevibacillus brevis (strain 47 / JCM 6285 / NBRC 100599) protein is Endoribonuclease YbeY.